Consider the following 582-residue polypeptide: GPI-anchor transamidase component PIGT (582 aa).

The signal sequence occupies residues 1–25 (MAAAMPLGLPLRLLVLLLVGRGCCG). Over 26–529 (CAEGPRDSLR…NLPTPDFSMP (504 aa)) the chain is Lumenal. The N-linked (GlcNAc...) asparagine glycan is linked to asparagine 168. 2 disulfides stabilise this stretch: cysteine 199–cysteine 276 and cysteine 230–cysteine 235. N-linked (GlcNAc...) asparagine glycans are attached at residues asparagine 295 and asparagine 331. Positions 465, 525, 527, and 531 each coordinate a 2-acyl-6-[6-phosphoethanolamine-alpha-D-mannosyl-(1-&gt;2)-6-phosphoethanolamine-alpha-D-mannosyl-(1-&gt;6)-2-phosphoethanolamine-alpha-D-mannosyl-(1-&gt;4)-alpha-D-glucosaminyl]-1-(1-radyl,2-acyl-sn-glycero-3-phospho)-1D-myo-inositol. Residues 530–552 (YNVICLTCTVVAVCYGSFYNLLT) traverse the membrane as a helical segment. The Cytoplasmic segment spans residues 553 to 582 (RTFHIEEPKSGGLAKRLANLIRRARGVPPL).

It belongs to the PIGT family. In terms of assembly, heteropentamer. Part of the GPI-anchor transamidase complex, consisting of PIGK, PIGT, PIGS, PIGU and GAA1. Post-translationally, the disulfide bond between PIGK/GPI8 and PIGT is important for normal enzyme activity.

Its subcellular location is the endoplasmic reticulum membrane. Its pathway is glycolipid biosynthesis; glycosylphosphatidylinositol-anchor biosynthesis. Component of the glycosylphosphatidylinositol-anchor (GPI-anchor) transamidase (GPI-T) complex that catalyzes the formation of the linkage between a proprotein and a GPI-anchor and participates in GPI anchored protein biosynthesis. May play a crucial role in GPI-T complex assembly in the luminal layer. Binds GPI-anchor. In Mus musculus (Mouse), this protein is GPI-anchor transamidase component PIGT.